A 355-amino-acid chain; its full sequence is Type II restriction enzyme CfrBI (355 aa).

The catalysed reaction is Endonucleolytic cleavage of DNA to give specific double-stranded fragments with terminal 5'-phosphates.. Its function is as follows. A P subtype restriction enzyme that recognizes the double-stranded sequence 5'-CCWWGG-3' and cleaves after C-1. This is Type II restriction enzyme CfrBI from Citrobacter freundii.